A 354-amino-acid polypeptide reads, in one-letter code: Glutaminyl-peptide cyclotransferase (354 aa).

Residues 1–8 (MRLLLRNY) constitute a mitochondrion transit peptide. A disulfide bridge links Cys-136 with Cys-158. Zn(2+) is bound at residue Asp-153. Glu-190 serves as the catalytic Proton acceptor. Glu-191 is a Zn(2+) binding site. The active-site Proton acceptor is the Asp-228. His-318 is a Zn(2+) binding site.

It belongs to the glutaminyl-peptide cyclotransferase family.

Its subcellular location is the secreted. The protein localises to the mitochondrion. The enzyme catalyses N-terminal L-glutaminyl-[peptide] = N-terminal 5-oxo-L-prolyl-[peptide] + NH4(+). Its activity is regulated as follows. Inhibited by imidazoles (imidazole, benzimidazole, 1-benzylimidazole, 1-methylimidazole, P150/03 and N-omega-acetylhistamine) and cysteamines (cysteamine and N-dimethylcysteamine). Inhibited by PDB50 1(3,4-dimethoxyphenyl)-3-(3-imidazol-1-ylpropyl)thiourea. Its function is as follows. Acts as a glutaminyl-peptide cyclotransferase. Responsible for the biosynthesis of pyroglutamyl peptides. Might be more efficient in the conversion of tri and tetrapeptides in vitro. Might have a relative preference for substrates containing hydrophobic amino acids in vitro. This is Glutaminyl-peptide cyclotransferase from Drosophila melanogaster (Fruit fly).